Reading from the N-terminus, the 367-residue chain is Glutamate 5-kinase (367 aa).

Position 17 (K17) interacts with ATP. Residues S57, D144, and N156 each coordinate substrate. Residues 176–177 (SD) and 217–223 (TGGMVSK) contribute to the ATP site. The PUA domain occupies 279 to 357 (VGSLTLDEGA…SELPCELRRP (79 aa)).

The protein belongs to the glutamate 5-kinase family.

Its subcellular location is the cytoplasm. The catalysed reaction is L-glutamate + ATP = L-glutamyl 5-phosphate + ADP. The protein operates within amino-acid biosynthesis; L-proline biosynthesis; L-glutamate 5-semialdehyde from L-glutamate: step 1/2. Its function is as follows. Catalyzes the transfer of a phosphate group to glutamate to form L-glutamate 5-phosphate. The polypeptide is Glutamate 5-kinase (Mycobacterium leprae (strain Br4923)).